Consider the following 148-residue polypeptide: Ribosome maturation factor RimP (148 aa).

Belongs to the RimP family.

The protein localises to the cytoplasm. Functionally, required for maturation of 30S ribosomal subunits. The chain is Ribosome maturation factor RimP from Thermosipho africanus (strain TCF52B).